A 297-amino-acid polypeptide reads, in one-letter code: Cell division protein FtsX (297 aa).

The Cytoplasmic segment spans residues 1–24 (MKAKTLSRHLREGVKNLSRNGWMT). The helical transmembrane segment at 25-45 (FASVSAVTVTLLLVGVFLTAI) threads the bilayer. The Extracellular portion of the chain corresponds to 46-171 (MNMNHFATKV…LFDTVKTGRN (126 aa)). The chain crosses the membrane as a helical span at residues 172–192 (IGIVLIAGLLFTAMFLISNTI). Topologically, residues 193–219 (KITIYARSTEIEIMKLVGATNWFIRWP) are cytoplasmic. Residues 220–240 (FLLEGLFLGVLGSIIPIGLIL) form a helical membrane-spanning segment. Residues 241-270 (VTYNSLQGMFNEKLGGTIFELLPYSPFVFQ) are Extracellular-facing. The helical transmembrane segment at 271 to 291 (LAGLLVLIGALIGMWGSVMSI) threads the bilayer. Residues 292–297 (RRFLKV) are Cytoplasmic-facing.

Belongs to the ABC-4 integral membrane protein family. FtsX subfamily. Interacts with FtsE.

Its subcellular location is the cell membrane. In terms of biological role, part of the ABC transporter FtsEX involved in asymmetric cellular division facilitating the initiation of sporulation. This chain is Cell division protein FtsX, found in Bacillus anthracis.